We begin with the raw amino-acid sequence, 392 residues long: Putative purine permease 19 (392 aa).

Over residues 1 to 16 (MGFHTKSPDRVTHEEE) the composition is skewed to basic and acidic residues. The tract at residues 1–29 (MGFHTKSPDRVTHEEEANIGVDNQPRETT) is disordered. Serine 30 bears the Phosphoserine mark. 10 helical membrane-spanning segments follow: residues 46 to 66 (ICIFVCSCLVVAGRVLSTLLL), 88 to 108 (WLQSMVQNAAFPFTAFLLLLW), 128 to 148 (LFLLYISLGVLFAAYSQLYAI), 154 to 174 (VFFLWIFTSQLIFTSIFTTII), 182 to 202 (WIILSMVLSGAATGLGITSSG), 220 to 240 (WCAFFGTVAFSLSLCIMQLGF), 254 to 274 (VILMQTNASMIATLICLVGLF), 300 to 320 (LIGLSLAWQVMSLGLVGLVCL), 325 to 345 (FSNVVSFCSTPLVNILLVLAF), and 354 to 374 (FFKEGALVAGILGFASYVYSL).

This sequence belongs to the purine permeases (TC 2.A.7.14) family.

Its subcellular location is the membrane. The chain is Putative purine permease 19 (PUP19) from Arabidopsis thaliana (Mouse-ear cress).